Reading from the N-terminus, the 574-residue chain is E3 ubiquitin-protein ligase NEURL1 (574 aa).

Residues 1 to 18 show a composition bias toward polar residues; sequence MGNNFSSVSSLQRGNPSR. Positions 1-53 are disordered; sequence MGNNFSSVSSLQRGNPSRASRGHPQNLKDSIGGSFPVPSHRCHHKQKHCPPTL. A lipid anchor (N-myristoyl glycine) is attached at Gly-2. 2 consecutive NHR domains span residues 61 to 217 and 292 to 447; these read TPLL…QLLD and GDLR…RILG. An RING-type zinc finger spans residues 520 to 560; that stretch reads ECTICYEHAVDTVIYTCGHMCLCYSCGLRLKKALHACCPIC.

As to quaternary structure, interacts with CPEB3 (via N-terminal domain); the interaction increases CPEB3 ubiquitination. Interacts with DLL1. Post-translationally, myristoylation is a determinant of membrane targeting. In terms of tissue distribution, expressed in CA1 pyramidal neurons (at protein level). Expressed throughout the adult forebrain, including the cerebral cortex, amygdala, striatum, and CA1 area of the hippocampus. Expressed in sensory neurons of the olfactory epithelium, the vomeronasal organ, mammary gland and skeletal muscle.

Its subcellular location is the cytoplasm. The protein resides in the perinuclear region. It is found in the cell membrane. It localises to the perikaryon. The protein localises to the cell projection. Its subcellular location is the dendrite. The protein resides in the postsynaptic density. The catalysed reaction is S-ubiquitinyl-[E2 ubiquitin-conjugating enzyme]-L-cysteine + [acceptor protein]-L-lysine = [E2 ubiquitin-conjugating enzyme]-L-cysteine + N(6)-ubiquitinyl-[acceptor protein]-L-lysine.. Its pathway is protein modification; protein ubiquitination. Its function is as follows. Plays a role in hippocampal-dependent synaptic plasticity, learning and memory. Involved in the formation of spines and functional synaptic contacts by modulating the translational activity of the cytoplasmic polyadenylation element-binding protein CPEB3. Promotes ubiquitination of CPEB3, and hence induces CPEB3-dependent mRNA translation activation of glutamate receptor GRIA1 and GRIA2. Can function as an E3 ubiquitin-protein ligase to activate monoubiquitination of JAG1 (in vitro), thereby regulating the Notch pathway. Acts as a tumor suppressor; inhibits malignant cell transformation of medulloblastoma (MB) cells by inhibiting the Notch signaling pathway. This Mus musculus (Mouse) protein is E3 ubiquitin-protein ligase NEURL1 (Neurl1).